The sequence spans 533 residues: 2,3-bisphosphoglycerate-independent phosphoglycerate mutase (533 aa).

The Mn(2+) site is built by D15 and S65. S65 acts as the Phosphoserine intermediate in catalysis. Substrate-binding positions include H126, 156-157 (RD), R188, R194, 258-261 (RPDR), and K331. Residues D398, H402, D439, H440, and H457 each coordinate Mn(2+).

It belongs to the BPG-independent phosphoglycerate mutase family. Monomer. Mn(2+) serves as cofactor.

It carries out the reaction (2R)-2-phosphoglycerate = (2R)-3-phosphoglycerate. The protein operates within carbohydrate degradation; glycolysis; pyruvate from D-glyceraldehyde 3-phosphate: step 3/5. Functionally, catalyzes the interconversion of 2-phosphoglycerate and 3-phosphoglycerate. This Trichormus variabilis (strain ATCC 29413 / PCC 7937) (Anabaena variabilis) protein is 2,3-bisphosphoglycerate-independent phosphoglycerate mutase.